A 374-amino-acid chain; its full sequence is Phosphatidyl-myo-inositol mannosyltransferase (374 aa).

Positions 9 and 16 each coordinate GDP-alpha-D-mannose. Residues Gln18, 62-63, and Arg68 contribute to the a 1,2-diacyl-sn-glycero-3-phospho-(1D-myo-inositol) site; that span reads YN. GDP-alpha-D-mannose is bound by residues Arg196, 201 to 202, 251 to 253, Lys256, 274 to 278, and Glu282; these read RK, VDD, and ESFGI.

This sequence belongs to the glycosyltransferase group 1 family. Glycosyltransferase 4 subfamily. In terms of assembly, monomer. It depends on Mg(2+) as a cofactor.

The protein resides in the cell membrane. It carries out the reaction a 1,2-diacyl-sn-glycero-3-phospho-(1D-myo-inositol) + GDP-alpha-D-mannose = a 1,2-diacyl-sn-glycero-3-phospho-[alpha-D-mannopyranosyl-(1&lt;-&gt;6)-D-myo-inositol] + GDP + H(+). The protein operates within phospholipid metabolism; phosphatidylinositol metabolism. Its function is as follows. Involved in the biosynthesis of phosphatidyl-myo-inositol mannosides (PIM) which are early precursors in the biosynthesis of lipomannans (LM) and lipoarabinomannans (LAM). Catalyzes the addition of a mannosyl residue from GDP-D-mannose (GDP-Man) to the position 2 of the carrier lipid phosphatidyl-myo-inositol (PI) to generate a phosphatidyl-myo-inositol bearing an alpha-1,2-linked mannose residue (PIM1). In Mycobacterium leprae (strain TN), this protein is Phosphatidyl-myo-inositol mannosyltransferase.